We begin with the raw amino-acid sequence, 182 residues long: Large ribosomal subunit protein uL6 (182 aa).

This sequence belongs to the universal ribosomal protein uL6 family. Part of the 50S ribosomal subunit.

Functionally, this protein binds to the 23S rRNA, and is important in its secondary structure. It is located near the subunit interface in the base of the L7/L12 stalk, and near the tRNA binding site of the peptidyltransferase center. The protein is Large ribosomal subunit protein uL6 of Haloquadratum walsbyi (strain DSM 16790 / HBSQ001).